Reading from the N-terminus, the 199-residue chain is Recombination protein RecR (199 aa).

The C4-type zinc finger occupies 57-72 (CQSCRTYTEETLCPIC). One can recognise a Toprim domain in the interval 81-176 (STICVVETPA…MISRIAHGVP (96 aa)).

It belongs to the RecR family.

Functionally, may play a role in DNA repair. It seems to be involved in an RecBC-independent recombinational process of DNA repair. It may act with RecF and RecO. The chain is Recombination protein RecR from Shewanella putrefaciens (strain CN-32 / ATCC BAA-453).